Reading from the N-terminus, the 199-residue chain is Recombination protein RecR (199 aa).

Residues C58–C73 form a C4-type zinc finger. One can recognise a Toprim domain in the interval K81–P175.

It belongs to the RecR family.

Functionally, may play a role in DNA repair. It seems to be involved in an RecBC-independent recombinational process of DNA repair. It may act with RecF and RecO. The protein is Recombination protein RecR of Prochlorococcus marinus subsp. pastoris (strain CCMP1986 / NIES-2087 / MED4).